The chain runs to 369 residues: Maltose/maltodextrin import ATP-binding protein MalK (369 aa).

In terms of domain architecture, ABC transporter spans 4-234; it reads VQLRNVTKAW…PADRFVAGFI (231 aa). 36-43 contributes to the ATP binding site; that stretch reads GPSGCGKS.

The protein belongs to the ABC transporter superfamily. Maltooligosaccharide importer (TC 3.A.1.1.1) family. In terms of assembly, the complex is composed of two ATP-binding proteins (MalK), two transmembrane proteins (MalG and MalK) and a solute-binding protein (MalE).

It is found in the cell inner membrane. It catalyses the reaction D-maltose(out) + ATP + H2O = D-maltose(in) + ADP + phosphate + H(+). In terms of biological role, part of the ABC transporter complex MalEFGK involved in maltose/maltodextrin import. Responsible for energy coupling to the transport system. This Salmonella choleraesuis (strain SC-B67) protein is Maltose/maltodextrin import ATP-binding protein MalK.